The chain runs to 314 residues: Probable phytol kinase 1, chloroplastic (314 aa).

Residues 1-62 constitute a chloroplast transit peptide; that stretch reads MAAAARPVDV…GVGAAAAPAV (62 aa). Helical transmembrane passes span 72–91, 111–131, 135–155, 181–201, 234–254, 266–286, and 294–314; these read AALRDCAATLLITAGAYSLV, IVHVLSGVLFMSSWPLFSNST, FFAAIVPLLNCIRLLTYGLRL, YVIVLLVSVLVFWRQSPIGIV, IGSISMFISGFLLSALMLFYF, LALGKLALVALAATVVECIPV, and ISVPLATMLAAYLLFGYSSCC.

This sequence belongs to the polyprenol kinase family.

It localises to the plastid. It is found in the chloroplast membrane. The catalysed reaction is phytol + CTP = phytyl phosphate + CDP + H(+). Its pathway is cofactor biosynthesis; tocopherol biosynthesis. Its function is as follows. Involved in the activation and reutilization of phytol from chlorophyll degradation in plant metabolism, including tocopherol biosynthesis. Catalyzes the conversion of phytol to phytol monophosphate (PMP). The chain is Probable phytol kinase 1, chloroplastic from Oryza sativa subsp. japonica (Rice).